The sequence spans 168 residues: MSSQSNTGNSIEAPQLPIPGQTNGSANVTVDGAGVNVGIQNGSQGQKTGMDLYFDQALNYMGEHPVITGFGAFLTLYFTAGAYKSISKGLNGGKSTTAFLKGGFDPKMNSKEALQILNLTENTLTKKKLKEVHRKIMLANHPDKGGSPFLATKINEAKDFLEKRGISK.

Over residues 1 to 12 the composition is skewed to polar residues; the sequence is MSSQSNTGNSIE. The disordered stretch occupies residues 1 to 29; the sequence is MSSQSNTGNSIEAPQLPIPGQTNGSANVT. At 1–65 the chain is on the mitochondrial intermembrane side; that stretch reads MSSQSNTGNS…QALNYMGEHP (65 aa). A helical membrane pass occupies residues 66–83; the sequence is VITGFGAFLTLYFTAGAY. The Mitochondrial matrix segment spans residues 84–168; the sequence is KSISKGLNGG…DFLEKRGISK (85 aa). Residues 112-168 form the J domain; sequence EALQILNLTENTLTKKKLKEVHRKIMLANHPDKGGSPFLATKINEAKDFLEKRGISK.

It belongs to the TIM14 family. Homodimer and heterodimer with PAM16/TIM16. Homodimerization may not be relevant in vivo, while heterodimerization is essential for activity regulation of mtHSP70. Component of the PAM complex, at least composed of mtHsp70, MGE1, TIM44, PAM16, PAM17 and PAM18/TIM14. Interacts directly with mtHsp70. Interacts directly with TIM17 subunit of the TIM23 complex.

The protein localises to the mitochondrion inner membrane. Its function is as follows. Essential component of the PAM complex, a complex required for the translocation of transit peptide-containing proteins from the inner membrane into the mitochondrial matrix in an ATP-dependent manner. In the complex, it is required to stimulate activity of mtHSP70 (SSC1). The chain is Mitochondrial import inner membrane translocase subunit TIM14 (PAM18) from Saccharomyces cerevisiae (strain ATCC 204508 / S288c) (Baker's yeast).